The sequence spans 342 residues: uncharacterized protein (342 aa).

Residues T155 to D309 enclose the Nudix hydrolase domain.

This is an uncharacterized protein from Saccharomyces cerevisiae (strain ATCC 204508 / S288c) (Baker's yeast).